The sequence spans 113 residues: CRISPR-associated endoribonuclease Cas2 2 (113 aa).

Aspartate 32 is a binding site for Mg(2+).

The protein belongs to the CRISPR-associated endoribonuclease Cas2 protein family. Homodimer, forms a heterotetramer with a Cas1 homodimer. Mg(2+) is required as a cofactor.

Its function is as follows. CRISPR (clustered regularly interspaced short palindromic repeat), is an adaptive immune system that provides protection against mobile genetic elements (viruses, transposable elements and conjugative plasmids). CRISPR clusters contain sequences complementary to antecedent mobile elements and target invading nucleic acids. CRISPR clusters are transcribed and processed into CRISPR RNA (crRNA). Functions as a ssRNA-specific endoribonuclease. Involved in the integration of spacer DNA into the CRISPR cassette. The protein is CRISPR-associated endoribonuclease Cas2 2 (cas22) of Nitrosomonas europaea (strain ATCC 19718 / CIP 103999 / KCTC 2705 / NBRC 14298).